We begin with the raw amino-acid sequence, 395 residues long: S-adenosylmethionine synthase (395 aa).

ATP is bound at residue His12. Asp14 provides a ligand contact to Mg(2+). Glu40 contributes to the K(+) binding site. L-methionine contacts are provided by Glu53 and Gln96. The segment at 96–106 (QSKEIADAVNF) is flexible loop. ATP contacts are provided by residues 174 to 176 (DGK), 242 to 243 (RF), Asp251, 257 to 258 (RK), Ala274, and Lys278. An L-methionine-binding site is contributed by Asp251. Lys282 contacts L-methionine.

Belongs to the AdoMet synthase family. As to quaternary structure, homotetramer; dimer of dimers. Requires Mg(2+) as cofactor. It depends on K(+) as a cofactor.

The protein resides in the cytoplasm. The catalysed reaction is L-methionine + ATP + H2O = S-adenosyl-L-methionine + phosphate + diphosphate. It participates in amino-acid biosynthesis; S-adenosyl-L-methionine biosynthesis; S-adenosyl-L-methionine from L-methionine: step 1/1. In terms of biological role, catalyzes the formation of S-adenosylmethionine (AdoMet) from methionine and ATP. The overall synthetic reaction is composed of two sequential steps, AdoMet formation and the subsequent tripolyphosphate hydrolysis which occurs prior to release of AdoMet from the enzyme. The sequence is that of S-adenosylmethionine synthase from Tropheryma whipplei (strain Twist) (Whipple's bacillus).